We begin with the raw amino-acid sequence, 533 residues long: Chromosomal replication initiator protein DnaA (533 aa).

The segment at 1 to 72 (MNDFWQHCSA…DLARDFWNAP (72 aa)) is domain I, interacts with DnaA modulators. Residues 72–196 (PIEVQFVLDP…EAADSMYERS (125 aa)) form a domain II region. The segment at 83 to 120 (AGQRSPAGATPLAPRAPLPSANPAPVAPGPASAPAVDA) is disordered. Residues 96–110 (PRAPLPSANPAPVAP) are compositionally biased toward pro residues. Residues 111–120 (GPASAPAVDA) are compositionally biased toward low complexity. The interval 197–413 (KLNPVLTFDN…GALRKILAYS (217 aa)) is domain III, AAA+ region. Residues glycine 241, glycine 243, lysine 244, and threonine 245 each contribute to the ATP site. The interval 414–533 (KFHGREITIE…LHVLEQTLKG (120 aa)) is domain IV, binds dsDNA.

It belongs to the DnaA family. In terms of assembly, oligomerizes as a right-handed, spiral filament on DNA at oriC.

It is found in the cytoplasm. Its function is as follows. Plays an essential role in the initiation and regulation of chromosomal replication. ATP-DnaA binds to the origin of replication (oriC) to initiate formation of the DNA replication initiation complex once per cell cycle. Binds the DnaA box (a 9 base pair repeat at the origin) and separates the double-stranded (ds)DNA. Forms a right-handed helical filament on oriC DNA; dsDNA binds to the exterior of the filament while single-stranded (ss)DNA is stabiized in the filament's interior. The ATP-DnaA-oriC complex binds and stabilizes one strand of the AT-rich DNA unwinding element (DUE), permitting loading of DNA polymerase. After initiation quickly degrades to an ADP-DnaA complex that is not apt for DNA replication. Binds acidic phospholipids. In Burkholderia pseudomallei (strain 1710b), this protein is Chromosomal replication initiator protein DnaA.